A 705-amino-acid chain; its full sequence is MADDIRILMCPPDHYDVDYVINPWMEGNIHKSSQERAVEQWKKLHQTIKECAIVDLVKPAKGWPDMVFTANAGLVLGENVVLSRFYHKERQGEEPYFKAWFEENGFTVYELPQDLPFEGAGDALFDREGRWLWAGYGFRSELDSHPYIAKWLDTEVVSLRLIDERFYHLDTCFCPLSGGYLLYYPPAFDAYSNRVIEMRIPPEKRIIVEELDAVNFACNAVNVNDIIIMNLVSRTLKEKLAEAGFKVRETPLTEFLKAGGAAKCLTLRVTEPILPDVHATVSIESRVIRMEGHLLDAGILNQALDLVVENSGSFRVLNFNLGVERNSTSSAEVRVSAPSHQIMEEIMTELIDLGAVPPPQELCDINTETVTQGGVAPDDFYVSTIYPTEVRVNCEWVQVTGQRMDAAIVVTSNPPSARCVLLRDLQVGDRVMVGVEGIRTIKKVESHEGGTRKENKEFAFMAAGVSSERRVELLVEQIAWEMRQIRDQGGKIVVTAGPVVIHTGGAQHLSHLVREGYVHALLGGNAIAVHDIEQATMGTSLGVDMQRGIPVRGGHRHHLKIINSVRRYGGIRQAVEAGFISKGVMYECVKNNIPYCLAGSIRDDGPLPDTEMNLVRAQSRYSELIQGADMILMLSSMLHSIGVGNMTPSGVKMVCVDINPAVVTKLSDRGSVESVGVVTDVGLFLSLLVRQLQQLTRPYSLAETL.

The tract at residues 10–269 (CPPDHYDVDY…GAAKCLTLRV (260 aa)) is arginine dihydrolase. L-arginine is bound by residues Asn22, Asn71, Arg90, Arg139, His168, Asp170, Ala258, and Cys264. The L-ornithine site is built by Asn22, Asn71, Arg90, Arg139, and His168. The active-site Proton donor/acceptor is the His168. Residues Ala258 and Cys264 each contribute to the L-ornithine site. The active-site Nucleophile is Cys264. Positions 285-695 (SRVIRMEGHL…SLLVRQLQQL (411 aa)) are ornithine cyclodeaminase. Positions 525, 526, 604, 636, 637, 638, 639, 657, 680, and 681 each coordinate NAD(+).

This sequence in the N-terminal section; belongs to the DDAH family. The protein in the C-terminal section; belongs to the AgrE/ArgZ ornithine cyclodeaminase family. Homotetramer. NAD(+) serves as cofactor.

It carries out the reaction L-arginine + 2 H2O + 2 H(+) = L-ornithine + 2 NH4(+) + CO2. The enzyme catalyses L-ornithine = L-proline + NH4(+). Arginine dihydrolase activity does not require a metal cofactor. Bifunctional enzyme involved in a cyanobacterial arginine utilization pathway that enables cellular adaptation to nitrogen fluctuations. Catalyzes the hydrolysis of arginine to ornithine, with the release of ammonia and carbon dioxide. Then, probably catalyzes the conversion of ornithine to proline, with the release of ammonia. Is highly specific for arginine and cannot hydrolyze citrulline, dimethylarginine and other amino acids. The chain is Bifunctional arginine dihydrolase/ornithine cyclodeaminase ArgZ from Synechocystis sp. (strain ATCC 27184 / PCC 6803 / Kazusa).